The chain runs to 499 residues: Taxadiene 5-alpha hydroxylase (499 aa).

A helical; Signal-anchor transmembrane segment spans residues 22 to 42 (TESFSIALSAIAGILLLLLLF). Residue Cys-445 participates in heme binding.

It belongs to the cytochrome P450 family. It depends on heme as a cofactor.

It is found in the membrane. The enzyme catalyses taxa-4(5),11(12)-diene + reduced [NADPH--hemoprotein reductase] + O2 = taxa-4(20),11-dien-5alpha-ol + oxidized [NADPH--hemoprotein reductase] + H2O + H(+). It participates in alkaloid biosynthesis; taxol biosynthesis; taxa-4(20),11-dien-5alpha-ol from geranylgeranyl diphosphate: step 2/2. Catalyzes the first oxygenation step of taxol biosynthesis. Can use both taxa-4(5),11(12)-diene and taxa-4(20),11(12)-diene as substrate. The protein is Taxadiene 5-alpha hydroxylase of Taxus cuspidata (Japanese yew).